A 216-amino-acid polypeptide reads, in one-letter code: Probable transaldolase (216 aa).

K83 (schiff-base intermediate with substrate) is an active-site residue.

The protein belongs to the transaldolase family. Type 3B subfamily.

It is found in the cytoplasm. The catalysed reaction is D-sedoheptulose 7-phosphate + D-glyceraldehyde 3-phosphate = D-erythrose 4-phosphate + beta-D-fructose 6-phosphate. It functions in the pathway carbohydrate degradation; pentose phosphate pathway; D-glyceraldehyde 3-phosphate and beta-D-fructose 6-phosphate from D-ribose 5-phosphate and D-xylulose 5-phosphate (non-oxidative stage): step 2/3. In terms of biological role, transaldolase is important for the balance of metabolites in the pentose-phosphate pathway. The sequence is that of Probable transaldolase from Sorangium cellulosum (strain So ce56) (Polyangium cellulosum (strain So ce56)).